The sequence spans 378 residues: Acetylornithine deacetylase (378 aa).

A Zn(2+)-binding site is contributed by His76. Residue Asp78 is part of the active site. Asp108 is a Zn(2+) binding site. The active site involves Glu140. Zn(2+) contacts are provided by Glu141, Glu165, and His351.

Belongs to the peptidase M20A family. ArgE subfamily. Homodimer. The cofactor is Zn(2+). Co(2+) serves as cofactor. Glutathione is required as a cofactor.

Its subcellular location is the cytoplasm. It catalyses the reaction N(2)-acetyl-L-ornithine + H2O = L-ornithine + acetate. It participates in amino-acid biosynthesis; L-arginine biosynthesis; L-ornithine from N(2)-acetyl-L-ornithine (linear): step 1/1. Its function is as follows. Catalyzes the hydrolysis of the amide bond of N(2)-acetylated L-amino acids. Cleaves the acetyl group from N-acetyl-L-ornithine to form L-ornithine, an intermediate in L-arginine biosynthesis pathway, and a branchpoint in the synthesis of polyamines. The polypeptide is Acetylornithine deacetylase (Aliivibrio fischeri (strain ATCC 700601 / ES114) (Vibrio fischeri)).